The sequence spans 750 residues: Sulfhydryl oxidase 1 (750 aa).

A signal peptide spans 1–32 (MGRCNRGSGPPSSLLLLLLLLLWLLAVPGASA). The Thioredoxin domain occupies 39–159 (YSPSDPLTLL…RERLIDALES (121 aa)). Residues Cys-73 and Cys-76 each act as nucleophile in the active site. 2 disulfide bridges follow: Cys-73–Cys-76 and Cys-104–Cys-113. Residues Asn-133 and Asn-246 are each glycosylated (N-linked (GlcNAc...) asparagine). Cysteines 396 and 408 form a disulfide. Positions 399-506 (SEPHFRGFPC…EDPQFPKVQW (108 aa)) constitute an ERV/ALR sulfhydryl oxidase domain. Residues Arg-404, Trp-411, and His-415 each coordinate FAD. Ser-429 carries the post-translational modification Phosphoserine. A disulfide bridge connects residues Cys-452 and Cys-455. Residues Asp-454, His-458, 481–488 (WSSHNRVN), Lys-503, and Trp-506 contribute to the FAD site. Residues Cys-512 and Cys-515 are joined by a disulfide bond. Asn-578 is a glycosylation site (N-linked (GlcNAc...) asparagine). Positions 578–645 (NSTVDLGKPE…REQPRGQWHL (68 aa)) are disordered. Basic and acidic residues predominate over residues 624-639 (PPEHMAELQTNEREQP). The chain crosses the membrane as a helical span at residues 713-733 (ISLCVGLYSLSFMGLLAMYAY).

This sequence belongs to the quiescin-sulfhydryl oxidase (QSOX) family. Monomer. FAD serves as cofactor. In terms of processing, N-glycosylated. O-glycosylated on Thr and Ser residues.

The protein resides in the golgi apparatus membrane. It localises to the secreted. It catalyses the reaction 2 R'C(R)SH + O2 = R'C(R)S-S(R)CR' + H2O2. In terms of biological role, catalyzes the oxidation of sulfhydryl groups in peptide and protein thiols to disulfides with the reduction of oxygen to hydrogen peroxide. Plays a role in disulfide bond formation in a variety of extracellular proteins. In fibroblasts, required for normal incorporation of laminin into the extracellular matrix, and thereby for normal cell-cell adhesion and cell migration. The chain is Sulfhydryl oxidase 1 (QSOX1) from Pongo abelii (Sumatran orangutan).